Here is a 70-residue protein sequence, read N- to C-terminus: Sec-independent protein translocase protein TatA (70 aa).

The helical transmembrane segment at 1–21 (MAIGVNQLLIILVIIVLLFGA) threads the bilayer.

Belongs to the TatA/E family. The Tat system comprises two distinct complexes: a TatABC complex, containing multiple copies of TatA, TatB and TatC subunits, and a separate TatA complex, containing only TatA subunits. Substrates initially bind to the TatABC complex, which probably triggers association of the separate TatA complex to form the active translocon.

The protein localises to the cell inner membrane. Functionally, part of the twin-arginine translocation (Tat) system that transports large folded proteins containing a characteristic twin-arginine motif in their signal peptide across membranes. TatA could form the protein-conducting channel of the Tat system. This is Sec-independent protein translocase protein TatA from Campylobacter curvus (strain 525.92).